Here is a 43-residue protein sequence, read N- to C-terminus: Thymosin beta-b (43 aa).

Composition is skewed to basic and acidic residues over residues 1–25 and 33–43; these read MADK…ETQE and ETIEQEKQCEA. The interval 1-43 is disordered; the sequence is MADKPDISEVSQFDKTKLKKTETQEKNTLPTKETIEQEKQCEA.

Belongs to the thymosin beta family.

It is found in the cytoplasm. Its subcellular location is the cytoskeleton. In terms of biological role, plays an important role in the organization of the cytoskeleton. Binds to and sequesters actin monomers (G actin) and therefore inhibits actin polymerization. In Cyprinus carpio (Common carp), this protein is Thymosin beta-b.